The following is a 432-amino-acid chain: GTPase HflX (432 aa).

A Hflx-type G domain is found at 202–367 (FTVALVGYTN…ELRRAVGRAM (166 aa)). GTP is bound by residues 208-215 (GYTNAGKS), 233-237 (FATLD), 255-258 (DTVG), 321-324 (NKID), and 345-347 (SAQ). The Mg(2+) site is built by S215 and T235.

Belongs to the TRAFAC class OBG-HflX-like GTPase superfamily. HflX GTPase family. In terms of assembly, monomer. Associates with the 50S ribosomal subunit. Mg(2+) serves as cofactor.

Its subcellular location is the cytoplasm. Functionally, GTPase that associates with the 50S ribosomal subunit and may have a role during protein synthesis or ribosome biogenesis. The sequence is that of GTPase HflX from Magnetococcus marinus (strain ATCC BAA-1437 / JCM 17883 / MC-1).